A 73-amino-acid chain; its full sequence is Large ribosomal subunit protein uL30 (73 aa).

It belongs to the universal ribosomal protein uL30 family. As to quaternary structure, part of the 50S ribosomal subunit.

The sequence is that of Large ribosomal subunit protein uL30 from Borreliella afzelii (strain PKo) (Borrelia afzelii).